A 340-amino-acid chain; its full sequence is Ketol-acid reductoisomerase (NADP(+)) (340 aa).

Residues 3–182 enclose the KARI N-terminal Rossmann domain; sequence VTMYYEEDVE…GCARVGIIET (180 aa). NADP(+) contacts are provided by residues 26–29, Arg49, Ser53, and 83–86; these read YGSQ and DELQ. Residue His108 is part of the active site. Position 134 (Gly134) interacts with NADP(+). Residues 183–328 enclose the KARI C-terminal knotted domain; sequence TFKEETEEDL…AELRKAMPFT (146 aa). Residues Asp191, Glu195, Glu227, and Glu231 each contribute to the Mg(2+) site. Residue Ser252 participates in substrate binding.

The protein belongs to the ketol-acid reductoisomerase family. The cofactor is Mg(2+).

The catalysed reaction is (2R)-2,3-dihydroxy-3-methylbutanoate + NADP(+) = (2S)-2-acetolactate + NADPH + H(+). It carries out the reaction (2R,3R)-2,3-dihydroxy-3-methylpentanoate + NADP(+) = (S)-2-ethyl-2-hydroxy-3-oxobutanoate + NADPH + H(+). The protein operates within amino-acid biosynthesis; L-isoleucine biosynthesis; L-isoleucine from 2-oxobutanoate: step 2/4. It functions in the pathway amino-acid biosynthesis; L-valine biosynthesis; L-valine from pyruvate: step 2/4. Involved in the biosynthesis of branched-chain amino acids (BCAA). Catalyzes an alkyl-migration followed by a ketol-acid reduction of (S)-2-acetolactate (S2AL) to yield (R)-2,3-dihydroxy-isovalerate. In the isomerase reaction, S2AL is rearranged via a Mg-dependent methyl migration to produce 3-hydroxy-3-methyl-2-ketobutyrate (HMKB). In the reductase reaction, this 2-ketoacid undergoes a metal-dependent reduction by NADPH to yield (R)-2,3-dihydroxy-isovalerate. The chain is Ketol-acid reductoisomerase (NADP(+)) from Lactococcus lactis subsp. cremoris (strain SK11).